The chain runs to 83 residues: Large ribosomal subunit protein eL31 (83 aa).

The protein belongs to the eukaryotic ribosomal protein eL31 family.

The chain is Large ribosomal subunit protein eL31 from Methanococcus vannielii (strain ATCC 35089 / DSM 1224 / JCM 13029 / OCM 148 / SB).